The following is a 229-amino-acid chain: Protein GrpE (229 aa).

The tract at residues Met-1–Gly-89 is disordered. The segment covering Ala-24 to Asp-36 has biased composition (low complexity). The segment covering Glu-39–Ala-50 has biased composition (basic and acidic residues). Low complexity predominate over residues Lys-65–Ser-84.

This sequence belongs to the GrpE family. Homodimer.

It localises to the cytoplasm. Participates actively in the response to hyperosmotic and heat shock by preventing the aggregation of stress-denatured proteins, in association with DnaK and GrpE. It is the nucleotide exchange factor for DnaK and may function as a thermosensor. Unfolded proteins bind initially to DnaJ; upon interaction with the DnaJ-bound protein, DnaK hydrolyzes its bound ATP, resulting in the formation of a stable complex. GrpE releases ADP from DnaK; ATP binding to DnaK triggers the release of the substrate protein, thus completing the reaction cycle. Several rounds of ATP-dependent interactions between DnaJ, DnaK and GrpE are required for fully efficient folding. The chain is Protein GrpE from Bifidobacterium animalis subsp. lactis (strain AD011).